We begin with the raw amino-acid sequence, 262 residues long: Acyl-[acyl-carrier-protein]--UDP-N-acetylglucosamine O-acyltransferase (262 aa).

It belongs to the transferase hexapeptide repeat family. LpxA subfamily. Homotrimer.

Its subcellular location is the cytoplasm. The enzyme catalyses a (3R)-hydroxyacyl-[ACP] + UDP-N-acetyl-alpha-D-glucosamine = a UDP-3-O-[(3R)-3-hydroxyacyl]-N-acetyl-alpha-D-glucosamine + holo-[ACP]. It participates in glycolipid biosynthesis; lipid IV(A) biosynthesis; lipid IV(A) from (3R)-3-hydroxytetradecanoyl-[acyl-carrier-protein] and UDP-N-acetyl-alpha-D-glucosamine: step 1/6. Involved in the biosynthesis of lipid A, a phosphorylated glycolipid that anchors the lipopolysaccharide to the outer membrane of the cell. This chain is Acyl-[acyl-carrier-protein]--UDP-N-acetylglucosamine O-acyltransferase, found in Pectobacterium carotovorum subsp. carotovorum (strain PC1).